A 488-amino-acid polypeptide reads, in one-letter code: ATP synthase subunit beta (488 aa).

Residue 164–171 (GGAGVGKT) participates in ATP binding.

The protein belongs to the ATPase alpha/beta chains family. F-type ATPases have 2 components, CF(1) - the catalytic core - and CF(0) - the membrane proton channel. CF(1) has five subunits: alpha(3), beta(3), gamma(1), delta(1), epsilon(1). CF(0) has four main subunits: a(1), b(1), b'(1) and c(9-12).

The protein resides in the cellular thylakoid membrane. The enzyme catalyses ATP + H2O + 4 H(+)(in) = ADP + phosphate + 5 H(+)(out). In terms of biological role, produces ATP from ADP in the presence of a proton gradient across the membrane. The catalytic sites are hosted primarily by the beta subunits. The protein is ATP synthase subunit beta of Prochlorococcus marinus (strain MIT 9303).